A 450-amino-acid polypeptide reads, in one-letter code: WD repeat-containing protein ATCSA-1 (450 aa).

WD repeat units follow at residues 41–81 (PHRG…DYEA), 101–141 (GHKY…AVVD), 148–185 (VYRTAMSSMAMSHTLIAAGTEDVQVRLCDIASGAFSHT), and 188–228 (GHRD…CFRV). Residues 269–298 (LQSKQTGSQSVKGSSSAKASVEKSRQKRIH) are disordered. Over residues 271–287 (SKQTGSQSVKGSSSAKA) the composition is skewed to low complexity. 2 WD repeats span residues 310 to 349 (AHYGAVTGLKATNDGMYLLSAGSDSRIRLWDIESGRNTLV) and 397 to 436 (GHYESVNTCCFNSNDQELYTSGSDRQILVWSPGGTVEDEM).

In terms of assembly, interacts with DDB1A. In terms of tissue distribution, expressed in roots, leaves, stems, flowers and siliques.

It localises to the nucleus. Functionally, involved in UV-B tolerance and genome integrity. In association with DDB2, is necessary for repair of UV-B-induced DNA lesions. This is WD repeat-containing protein ATCSA-1 from Arabidopsis thaliana (Mouse-ear cress).